The sequence spans 334 residues: Fructose-1,6-bisphosphatase class 1 (334 aa).

Mg(2+) contacts are provided by glutamate 91, aspartate 113, leucine 115, and aspartate 116. Substrate is bound by residues 116–119 (DGSS), asparagine 208, and lysine 274. Glutamate 280 provides a ligand contact to Mg(2+).

This sequence belongs to the FBPase class 1 family. In terms of assembly, homotetramer. The cofactor is Mg(2+).

The protein localises to the cytoplasm. It catalyses the reaction beta-D-fructose 1,6-bisphosphate + H2O = beta-D-fructose 6-phosphate + phosphate. Its pathway is carbohydrate biosynthesis; gluconeogenesis. This is Fructose-1,6-bisphosphatase class 1 from Janthinobacterium sp. (strain Marseille) (Minibacterium massiliensis).